A 191-amino-acid chain; its full sequence is Putative endogenous retrovirus group K member 11-1 Env polyprotein (191 aa).

The truncated surface protein stretch occupies residues 1–191; sequence MPGAIDDHCP…DITLHPQGLV (191 aa).

This sequence belongs to the beta type-B retroviral envelope protein family. HERV class-II K(HML-8) env subfamily. As to expression, cerebellum and testis.

The protein localises to the virion. Its function is as follows. Retroviral envelope proteins mediate receptor recognition and membrane fusion during early infection. Endogenous envelope proteins may have kept, lost or modified their original function during evolution. The protein is Putative endogenous retrovirus group K member 11-1 Env polyprotein (ERVK11-1) of Homo sapiens (Human).